Reading from the N-terminus, the 737-residue chain is ATP-dependent RNA helicase DDX50 (737 aa).

The tract at residues 1–131 is disordered; the sequence is MPGKLLWGDI…SDNKLEETLT (131 aa). Residues 11-20 are compositionally biased toward acidic residues; the sequence is MELEAPLEES. Basic and acidic residues-rich tracts occupy residues 38-51, 67-87, and 117-131; these read HYDSDEKSETRENG, KEKLNGDTEEGFNRLSDEFSK, and STHKSSDNKLEETLT. Phosphoserine occurs at positions 41, 82, 86, 121, and 122. A Glycyl lysine isopeptide (Lys-Gly) (interchain with G-Cter in SUMO2) cross-link involves residue Lys125. The short motif at 137-165 is the Q motif element; the sequence is GAFSNFPISEETIKLLKGRGVTYLFPIQV. Residues 168 to 347 form the Helicase ATP-binding domain; that stretch reads FGPVYEGKDL…KKYMKSRYEQ (180 aa). 181 to 188 is an ATP binding site; the sequence is ARTGTGKT. Phosphothreonine is present on Thr247. The DEVD box motif lies at 290 to 293; sequence DEVD. Positions 380-524 constitute a Helicase C-terminal domain; the sequence is DVLQVYSGSE…GVPSTMDLVK (145 aa). Ser518 is modified (phosphoserine). The interval 668-737 is disordered; the sequence is YDGNTSSNSR…RSGGHKRSFD (70 aa). Residues 673-687 show a composition bias toward low complexity; it reads SSNSRQRSGWSSGRS. Residues 691–701 show a composition bias toward gly residues; that stretch reads GRSGGRSGGRS. Residues 702-712 are compositionally biased toward low complexity; that stretch reads GRQSRQGSRSG. Residues 720–737 are compositionally biased toward basic residues; sequence RSGNRNRSRSGGHKRSFD.

Belongs to the DEAD box helicase family. DDX21/DDX50 subfamily. Interacts with C1QBP. Interacts with the ubiquitin ligase CTLH complex through GID4. Interacts with TICAM1. As to expression, highest expression in skeletal muscle, liver, heart, placenta, and kidney.

It localises to the nucleus. Its subcellular location is the nucleolus. It is found in the cytoplasm. The enzyme catalyses ATP + H2O = ADP + phosphate + H(+). Its function is as follows. ATP-dependent RNA helicase that may play a role in various aspects of RNA metabolism including pre-mRNA splicing or ribosomal RNA production. Also acts as a viral restriction factor and promotes the activation of the NF-kappa-B and IRF3 signaling pathways following its stimulation with viral RNA or infection with RNA and DNA viruses. For instance, decreases vaccinia virus, herpes simplex virus, Zika virus or dengue virus replication during the early stage of infection. Mechanistically, acts via the adapter TICAM1 and independently of the DDX1-DDX21-DHX36 helicase complex to induce the production of interferon-beta. The chain is ATP-dependent RNA helicase DDX50 (DDX50) from Homo sapiens (Human).